The sequence spans 384 residues: Fructose-1,6-bisphosphate aldolase/phosphatase (384 aa).

Asp11 acts as the Proton acceptor; for FBP phosphatase activity in catalysis. Mg(2+) contacts are provided by Asp11, His18, Asp52, and Asp53. His18 serves as a coordination point for beta-D-fructose 1,6-bisphosphate. His18 provides a ligand contact to dihydroxyacetone phosphate. Residue Tyr90 coordinates beta-D-fructose 1,6-bisphosphate. Gln94 lines the Mg(2+) pocket. 103 to 104 is a beta-D-fructose 1,6-bisphosphate binding site; that stretch reads GN. A Mg(2+)-binding site is contributed by Asp131. Lys132 contacts beta-D-fructose 1,6-bisphosphate. Lys132 lines the dihydroxyacetone phosphate pocket. Tyr228 serves as the catalytic Proton donor/acceptor; for FBP aldolase activity. Residues Lys231, Asp232, and Asp233 each coordinate Mg(2+). Lys231 (schiff-base intermediate with DHAP; for FBP aldolase activity) is an active-site residue. Residues 241–242, Arg265, Asp286, and Tyr347 each bind beta-D-fructose 1,6-bisphosphate; that span reads QH. Dihydroxyacetone phosphate is bound by residues Arg265 and Asp286.

It belongs to the FBP aldolase/phosphatase family. Homooctamer; dimer of tetramers. Requires Mg(2+) as cofactor.

It carries out the reaction beta-D-fructose 1,6-bisphosphate + H2O = beta-D-fructose 6-phosphate + phosphate. The enzyme catalyses beta-D-fructose 1,6-bisphosphate = D-glyceraldehyde 3-phosphate + dihydroxyacetone phosphate. Its pathway is carbohydrate biosynthesis; gluconeogenesis. Functionally, catalyzes two subsequent steps in gluconeogenesis: the aldol condensation of dihydroxyacetone phosphate (DHAP) and glyceraldehyde-3-phosphate (GA3P) to fructose-1,6-bisphosphate (FBP), and the dephosphorylation of FBP to fructose-6-phosphate (F6P). This is Fructose-1,6-bisphosphate aldolase/phosphatase from Sulfurisphaera tokodaii (strain DSM 16993 / JCM 10545 / NBRC 100140 / 7) (Sulfolobus tokodaii).